The sequence spans 262 residues: Indole-3-glycerol phosphate synthase (262 aa).

It belongs to the TrpC family.

The catalysed reaction is 1-(2-carboxyphenylamino)-1-deoxy-D-ribulose 5-phosphate + H(+) = (1S,2R)-1-C-(indol-3-yl)glycerol 3-phosphate + CO2 + H2O. It functions in the pathway amino-acid biosynthesis; L-tryptophan biosynthesis; L-tryptophan from chorismate: step 4/5. In Bordetella pertussis (strain Tohama I / ATCC BAA-589 / NCTC 13251), this protein is Indole-3-glycerol phosphate synthase.